The following is a 252-amino-acid chain: PF03932 family protein CutC (252 aa).

The protein belongs to the CutC family.

Its subcellular location is the cytoplasm. The chain is PF03932 family protein CutC from Pectobacterium atrosepticum (strain SCRI 1043 / ATCC BAA-672) (Erwinia carotovora subsp. atroseptica).